The chain runs to 170 residues: ATP synthase subunit b (170 aa).

Residues 15-37 (GDILFQLLAMLILLALLKKYALG) form a helical membrane-spanning segment.

The protein belongs to the ATPase B chain family. F-type ATPases have 2 components, F(1) - the catalytic core - and F(0) - the membrane proton channel. F(1) has five subunits: alpha(3), beta(3), gamma(1), delta(1), epsilon(1). F(0) has three main subunits: a(1), b(2) and c(10-14). The alpha and beta chains form an alternating ring which encloses part of the gamma chain. F(1) is attached to F(0) by a central stalk formed by the gamma and epsilon chains, while a peripheral stalk is formed by the delta and b chains. The F(1)F(0) complex interacts with SpoIIIJ and YqjG; YqgA is found in the same complex.

Its subcellular location is the cell membrane. F(1)F(0) ATP synthase produces ATP from ADP in the presence of a proton or sodium gradient. F-type ATPases consist of two structural domains, F(1) containing the extramembraneous catalytic core and F(0) containing the membrane proton channel, linked together by a central stalk and a peripheral stalk. During catalysis, ATP synthesis in the catalytic domain of F(1) is coupled via a rotary mechanism of the central stalk subunits to proton translocation. Functionally, component of the F(0) channel, it forms part of the peripheral stalk, linking F(1) to F(0). This Bacillus subtilis (strain 168) protein is ATP synthase subunit b.